A 142-amino-acid chain; its full sequence is Hemoglobin subunit alpha-B (142 aa).

The Globin domain occupies Pro-2–Arg-142. Gln-59 contacts O2. His-88 lines the heme b pocket.

This sequence belongs to the globin family. In terms of assembly, heterotetramer of either two alpha-B chains or two alpha-C chains and two beta chains. The two major hemoglobins, B and C, associate upon deoxygenation to form a trimer of tetramers, BC2, that has a much lower affinity for oxygen than either component alone. In terms of tissue distribution, red blood cells.

Functionally, the alpha-B chain is a component of adult hemoglobin B. This chain is Hemoglobin subunit alpha-B, found in Aquarana catesbeiana (American bullfrog).